Reading from the N-terminus, the 693-residue chain is Elongation factor G (693 aa).

The region spanning 8-282 is the tr-type G domain; it reads EKTRNIGIMA…AVIDYLPSPL (275 aa). GTP-binding positions include 17 to 24, 81 to 85, and 135 to 138; these read AHVDAGKT, DTPGH, and NKMD.

This sequence belongs to the TRAFAC class translation factor GTPase superfamily. Classic translation factor GTPase family. EF-G/EF-2 subfamily.

It is found in the cytoplasm. In terms of biological role, catalyzes the GTP-dependent ribosomal translocation step during translation elongation. During this step, the ribosome changes from the pre-translocational (PRE) to the post-translocational (POST) state as the newly formed A-site-bound peptidyl-tRNA and P-site-bound deacylated tRNA move to the P and E sites, respectively. Catalyzes the coordinated movement of the two tRNA molecules, the mRNA and conformational changes in the ribosome. This chain is Elongation factor G, found in Streptococcus pneumoniae serotype 2 (strain D39 / NCTC 7466).